The chain runs to 282 residues: Bis(5'-nucleosyl)-tetraphosphatase, symmetrical (282 aa).

The protein belongs to the Ap4A hydrolase family.

It catalyses the reaction P(1),P(4)-bis(5'-adenosyl) tetraphosphate + H2O = 2 ADP + 2 H(+). Functionally, hydrolyzes diadenosine 5',5'''-P1,P4-tetraphosphate to yield ADP. This chain is Bis(5'-nucleosyl)-tetraphosphatase, symmetrical, found in Enterobacter sp. (strain 638).